A 193-amino-acid chain; its full sequence is NAD(P)H-quinone oxidoreductase subunit I (193 aa).

4Fe-4S ferredoxin-type domains follow at residues Gly-56 to Glu-85 and Lys-96 to Glu-125. [4Fe-4S] cluster is bound by residues Cys-65, Cys-68, Cys-71, Cys-75, Cys-105, Cys-108, Cys-111, and Cys-115. The interval Asn-174 to Glu-193 is disordered. The span at Gln-184–Glu-193 shows a compositional bias: basic and acidic residues.

The protein belongs to the complex I 23 kDa subunit family. As to quaternary structure, NDH-1 is composed of at least 11 different subunits. [4Fe-4S] cluster serves as cofactor.

Its subcellular location is the cellular thylakoid membrane. It catalyses the reaction a plastoquinone + NADH + (n+1) H(+)(in) = a plastoquinol + NAD(+) + n H(+)(out). It carries out the reaction a plastoquinone + NADPH + (n+1) H(+)(in) = a plastoquinol + NADP(+) + n H(+)(out). Its function is as follows. NDH-1 shuttles electrons from an unknown electron donor, via FMN and iron-sulfur (Fe-S) centers, to quinones in the respiratory and/or the photosynthetic chain. The immediate electron acceptor for the enzyme in this species is believed to be plastoquinone. Couples the redox reaction to proton translocation, and thus conserves the redox energy in a proton gradient. The polypeptide is NAD(P)H-quinone oxidoreductase subunit I (Synechocystis sp. (strain ATCC 27184 / PCC 6803 / Kazusa)).